Consider the following 249-residue polypeptide: Phosphate import ATP-binding protein PstB (249 aa).

Residues 5–244 enclose the ABC transporter domain; the sequence is LRIEDLHFWY…PEKDRTEAYV (240 aa). 37–44 provides a ligand contact to ATP; sequence GPSGCGKS.

The protein belongs to the ABC transporter superfamily. Phosphate importer (TC 3.A.1.7) family. As to quaternary structure, the complex is composed of two ATP-binding proteins (PstB), two transmembrane proteins (PstC and PstA) and a solute-binding protein (PstS).

Its subcellular location is the cell inner membrane. The enzyme catalyses phosphate(out) + ATP + H2O = ADP + 2 phosphate(in) + H(+). Its function is as follows. Part of the ABC transporter complex PstSACB involved in phosphate import. Responsible for energy coupling to the transport system. In Salinibacter ruber (strain DSM 13855 / M31), this protein is Phosphate import ATP-binding protein PstB.